The sequence spans 168 residues: Co-chaperone protein HscB homolog (168 aa).

One can recognise a J domain in the interval D5–S77.

The protein belongs to the HscB family. Interacts with HscA and stimulates its ATPase activity.

Functionally, co-chaperone involved in the maturation of iron-sulfur cluster-containing proteins. Seems to help targeting proteins to be folded toward HscA. This Bordetella avium (strain 197N) protein is Co-chaperone protein HscB homolog.